The chain runs to 501 residues: Probable cysteine desulfurase, mitochondrial (501 aa).

Pyridoxal 5'-phosphate contacts are provided by residues 172–173 (AT), Asn-252, Gln-280, and 300–302 (SAH). The residue at position 303 (Lys-303) is an N6-(pyridoxal phosphate)lysine. Position 340 (Thr-340) interacts with pyridoxal 5'-phosphate. Cys-425 (cysteine persulfide intermediate) is an active-site residue. Cys-425 contributes to the [2Fe-2S] cluster binding site.

The protein belongs to the class-V pyridoxal-phosphate-dependent aminotransferase family. NifS/IscS subfamily. It depends on pyridoxal 5'-phosphate as a cofactor.

Its subcellular location is the mitochondrion. The enzyme catalyses (sulfur carrier)-H + L-cysteine = (sulfur carrier)-SH + L-alanine. Catalyzes the removal of elemental sulfur from cysteine to produce alanine. It supplies the inorganic sulfur for iron-sulfur (Fe-S) clusters. Plays a role in both tRNA-processing and mitochondrial metabolism. Involved in the 2-thio-modification of both 5-carboxymethylaminomethyl-2-thiouridine in mitochondrial tRNAs and 5-methoxycarbonylmethyl-2-thiouridine (mcm5s2U) in cytoplasmic tRNAs. The protein is Probable cysteine desulfurase, mitochondrial of Schizosaccharomyces pombe (strain 972 / ATCC 24843) (Fission yeast).